A 251-amino-acid polypeptide reads, in one-letter code: Putative fatty acid elongase DDB_G0274669 (251 aa).

The next 5 helical transmembrane spans lie at 51-71 (FQII…IKFL), 82-102 (FISI…CVGV), 135-155 (WSYI…IIVL), 177-197 (YITM…VLHV), and 211-231 (AFAA…KFFV).

The protein belongs to the ELO family.

The protein resides in the membrane. It catalyses the reaction a very-long-chain acyl-CoA + malonyl-CoA + H(+) = a very-long-chain 3-oxoacyl-CoA + CO2 + CoA. In terms of biological role, could be implicated in synthesis of very long chain fatty acids. This Dictyostelium discoideum (Social amoeba) protein is Putative fatty acid elongase DDB_G0274669.